The sequence spans 293 residues: Ribosomal RNA small subunit methyltransferase A (293 aa).

Residues asparagine 29, leucine 31, glycine 56, glutamate 77, aspartate 102, and asparagine 127 each coordinate S-adenosyl-L-methionine.

It belongs to the class I-like SAM-binding methyltransferase superfamily. rRNA adenine N(6)-methyltransferase family. RsmA subfamily.

The protein resides in the cytoplasm. The enzyme catalyses adenosine(1518)/adenosine(1519) in 16S rRNA + 4 S-adenosyl-L-methionine = N(6)-dimethyladenosine(1518)/N(6)-dimethyladenosine(1519) in 16S rRNA + 4 S-adenosyl-L-homocysteine + 4 H(+). Functionally, specifically dimethylates two adjacent adenosines (A1518 and A1519) in the loop of a conserved hairpin near the 3'-end of 16S rRNA in the 30S particle. May play a critical role in biogenesis of 30S subunits. This is Ribosomal RNA small subunit methyltransferase A from Geobacillus kaustophilus (strain HTA426).